The sequence spans 34 residues: MSDIN-like toxin proprotein 4 (34 aa).

Positions 1 to 10 (MSDINTARLP) are excised as a propeptide. A cross-link (cyclopeptide (Leu-Pro)) is located at residues 11-20 (LFLPPVRMPP). The propeptide occupies 21–34 (CVGDDIEMVLTRGE).

This sequence belongs to the MSDIN fungal toxin family. Post-translationally, processed by the macrocyclase-peptidase enzyme POPB to yield a toxic cyclic decapeptide. POPB first removes 10 residues from the N-terminus. Conformational trapping of the remaining peptide forces the enzyme to release this intermediate rather than proceed to macrocyclization. The enzyme rebinds the remaining peptide in a different conformation and catalyzes macrocyclization of the N-terminal 10 residues.

In terms of biological role, probable toxin that belongs to the MSDIN-like toxin family responsible for a large number of food poisoning cases and deaths. The chain is MSDIN-like toxin proprotein 4 from Amanita bisporigera (Destroying angel).